The primary structure comprises 578 residues: Adhesion G protein-coupled receptor A1 (578 aa).

At methionine 1–proline 22 the chain is on the extracellular side. Residues valine 23–isoleucine 43 form a helical membrane-spanning segment. Over leucine 44–arginine 56 the chain is Cytoplasmic. A helical transmembrane segment spans residues histidine 57–isoleucine 77. At asparagine 78 to glutamine 87 the chain is on the extracellular side. A helical transmembrane segment spans residues alanine 88–alanine 108. The Cytoplasmic segment spans residues arginine 109–arginine 137. A helical membrane pass occupies residues phenylalanine 138 to isoleucine 158. At arginine 159–serine 178 the chain is on the extracellular side. Residues leucine 179–cysteine 199 traverse the membrane as a helical segment. Over threonine 200–arginine 262 the chain is Cytoplasmic. The segment at glutamate 216–arginine 236 is disordered. The helical transmembrane segment at alanine 263–serine 283 threads the bilayer. Topologically, residues glutamine 284–aspartate 289 are extracellular. A helical transmembrane segment spans residues methionine 290–histidine 310. 2 disordered regions span residues proline 463–methionine 486 and serine 537–valine 578. A compositionally biased stretch (low complexity) spans serine 469–serine 481. The segment covering serine 537–leucine 548 has biased composition (polar residues).

It belongs to the G-protein coupled receptor 2 family. Adhesion G-protein coupled receptor (ADGR) subfamily. Predominantly expressed in CNS.

It is found in the membrane. In Mus musculus (Mouse), this protein is Adhesion G protein-coupled receptor A1.